Here is a 323-residue protein sequence, read N- to C-terminus: 3-dehydroquinate synthase (323 aa).

This sequence belongs to the archaeal-type DHQ synthase family.

It catalyses the reaction 2-amino-2,3,7-trideoxy-D-lyxo-hept-6-ulosonate + NAD(+) + H2O = 3-dehydroquinate + NH4(+) + NADH + H(+). Its function is as follows. Catalyzes the oxidative deamination and cyclization of 2-amino-3,7-dideoxy-D-threo-hept-6-ulosonic acid (ADH) to yield 3-dehydroquinate (DHQ), which is fed into the canonical shikimic pathway of aromatic amino acid biosynthesis. The sequence is that of 3-dehydroquinate synthase from Archaeoglobus fulgidus (strain ATCC 49558 / DSM 4304 / JCM 9628 / NBRC 100126 / VC-16).